The following is a 102-amino-acid chain: ATP-dependent Clp protease adapter protein ClpS (102 aa).

Belongs to the ClpS family. Binds to the N-terminal domain of the chaperone ClpA.

Functionally, involved in the modulation of the specificity of the ClpAP-mediated ATP-dependent protein degradation. The protein is ATP-dependent Clp protease adapter protein ClpS of Shewanella piezotolerans (strain WP3 / JCM 13877).